A 324-amino-acid polypeptide reads, in one-letter code: Ribosomal RNA small subunit methyltransferase H (324 aa).

S-adenosyl-L-methionine-binding positions include Gly-47–His-49, Asp-67, Leu-96, Asp-115, and Gln-122.

It belongs to the methyltransferase superfamily. RsmH family.

It is found in the cytoplasm. It catalyses the reaction cytidine(1402) in 16S rRNA + S-adenosyl-L-methionine = N(4)-methylcytidine(1402) in 16S rRNA + S-adenosyl-L-homocysteine + H(+). Its function is as follows. Specifically methylates the N4 position of cytidine in position 1402 (C1402) of 16S rRNA. The chain is Ribosomal RNA small subunit methyltransferase H from Halorhodospira halophila (strain DSM 244 / SL1) (Ectothiorhodospira halophila (strain DSM 244 / SL1)).